A 96-amino-acid chain; its full sequence is Aspartyl/glutamyl-tRNA(Asn/Gln) amidotransferase subunit C (96 aa).

This sequence belongs to the GatC family. Heterotrimer of A, B and C subunits.

It catalyses the reaction L-glutamyl-tRNA(Gln) + L-glutamine + ATP + H2O = L-glutaminyl-tRNA(Gln) + L-glutamate + ADP + phosphate + H(+). It carries out the reaction L-aspartyl-tRNA(Asn) + L-glutamine + ATP + H2O = L-asparaginyl-tRNA(Asn) + L-glutamate + ADP + phosphate + 2 H(+). In terms of biological role, allows the formation of correctly charged Asn-tRNA(Asn) or Gln-tRNA(Gln) through the transamidation of misacylated Asp-tRNA(Asn) or Glu-tRNA(Gln) in organisms which lack either or both of asparaginyl-tRNA or glutaminyl-tRNA synthetases. The reaction takes place in the presence of glutamine and ATP through an activated phospho-Asp-tRNA(Asn) or phospho-Glu-tRNA(Gln). The chain is Aspartyl/glutamyl-tRNA(Asn/Gln) amidotransferase subunit C from Chloroflexus aurantiacus (strain ATCC 29366 / DSM 635 / J-10-fl).